Reading from the N-terminus, the 96-residue chain is UPF0235 protein NT01EI_0281 (96 aa).

Belongs to the UPF0235 family.

The sequence is that of UPF0235 protein NT01EI_0281 from Edwardsiella ictaluri (strain 93-146).